Here is a 2555-residue protein sequence, read N- to C-terminus: Neurogenic locus notch homolog protein 1 (2555 aa).

An N-terminal signal peptide occupies residues Met-1 to Ala-18. Topologically, residues Ala-19–His-1735 are extracellular. 4 consecutive EGF-like domains span residues Arg-20 to Gln-58, Asp-59 to Leu-99, Leu-102 to Gln-139, and Gln-140 to Arg-176. 33 cysteine pairs are disulfide-bonded: Cys-24-Cys-37, Cys-31-Cys-46, Cys-48-Cys-57, Cys-63-Cys-74, Cys-68-Cys-87, Cys-89-Cys-98, Cys-106-Cys-117, Cys-111-Cys-127, Cys-129-Cys-138, Cys-144-Cys-155, Cys-149-Cys-164, Cys-166-Cys-175, Cys-182-Cys-195, Cys-189-Cys-204, Cys-206-Cys-215, Cys-222-Cys-233, Cys-227-Cys-243, Cys-245-Cys-254, Cys-261-Cys-272, Cys-266-Cys-281, Cys-283-Cys-292, Cys-299-Cys-312, Cys-306-Cys-321, Cys-323-Cys-332, Cys-339-Cys-350, Cys-344-Cys-359, Cys-361-Cys-370, Cys-376-Cys-387, Cys-381-Cys-398, Cys-400-Cys-409, Cys-416-Cys-429, Cys-423-Cys-438, and Cys-440-Cys-449. The N-linked (GlcNAc...) asparagine glycan is linked to Asn-41. An O-linked (Glc...) serine glycan is attached at Ser-65. Thr-73 is a glycosylation site (O-linked (Fuc...) threonine). O-linked (Fuc...) threonine glycosylation occurs at Thr-116. Ser-146 is a glycosylation site (O-linked (Glc...) serine). Residues Asp-178–Glu-216 form the EGF-like 5; calcium-binding domain. An O-linked (Fuc...) threonine glycan is attached at Thr-194. The EGF-like 6 domain occupies Pro-218–Glu-255. O-linked (Fuc...) threonine; alternate glycosylation is present at Thr-232. Thr-232 carries O-linked (GalNAc...) threonine; alternate glycosylation. The EGF-like 7; calcium-binding domain occupies Asn-257–Thr-293. The EGF-like 8; calcium-binding domain maps to Asp-295–Ser-333. An O-linked (Fuc...) threonine glycan is attached at Thr-311. The EGF-like 9; calcium-binding domain maps to Asn-335–His-371. O-linked (Glc...) serine glycosylation is present at Ser-341. A glycan (O-linked (Fuc...) threonine) is linked at Thr-349. One can recognise an EGF-like 10 domain in the interval Leu-372–Ser-410. The O-linked (Glc...) serine glycan is linked to Ser-378. Residues Asp-412–Glu-450 form the EGF-like 11; calcium-binding domain. The interval Ala-420 to Asn-421 is interaction with DLL4. Residues Thr-432 and Ser-435 each contribute to the Ca(2+) site. The O-linked (Glc...) serine glycan is linked to Ser-435. Residues Arg-448 to Asp-452 form an interaction with DLL4 region. Residues Asp-452, Val-453, and Glu-455 each contribute to the Ca(2+) site. The 37-residue stretch at Asp-452 to Glu-488 folds into the EGF-like 12; calcium-binding domain. 3 disulfide bridges follow: Cys-456-Cys-467, Cys-461-Cys-476, and Cys-478-Cys-487. O-linked (Glc...) serine glycosylation occurs at Ser-458. O-linked (Fuc...) threonine glycosylation is present at Thr-466. Asp-469 and Gln-470 together coordinate Ca(2+). Ca(2+) contacts are provided by Asn-490, Thr-491, and Glu-493. One can recognise an EGF-like 13; calcium-binding domain in the interval Asn-490–Gln-526. Intrachain disulfides connect Cys-494–Cys-505, Cys-499–Cys-514, Cys-516–Cys-525, Cys-532–Cys-543, Cys-537–Cys-552, Cys-554–Cys-563, Cys-570–Cys-580, Cys-575–Cys-589, Cys-591–Cys-600, Cys-607–Cys-618, Cys-612–Cys-627, Cys-629–Cys-638, Cys-645–Cys-655, Cys-650–Cys-664, Cys-666–Cys-675, Cys-682–Cys-693, Cys-687–Cys-702, Cys-704–Cys-713, Cys-720–Cys-730, Cys-725–Cys-739, Cys-741–Cys-750, Cys-757–Cys-768, Cys-762–Cys-777, Cys-779–Cys-788, Cys-795–Cys-806, Cys-800–Cys-815, Cys-817–Cys-826, Cys-833–Cys-844, Cys-838–Cys-855, Cys-857–Cys-866, Cys-873–Cys-884, Cys-878–Cys-893, Cys-895–Cys-904, Cys-911–Cys-922, Cys-916–Cys-931, Cys-933–Cys-942, Cys-949–Cys-960, Cys-954–Cys-969, Cys-971–Cys-980, Cys-987–Cys-998, Cys-992–Cys-1007, Cys-1009–Cys-1018, Cys-1025–Cys-1036, Cys-1030–Cys-1045, Cys-1047–Cys-1056, Cys-1063–Cys-1074, Cys-1068–Cys-1083, Cys-1085–Cys-1094, Cys-1101–Cys-1122, Cys-1116–Cys-1131, Cys-1133–Cys-1142, Cys-1149–Cys-1160, Cys-1154–Cys-1169, Cys-1171–Cys-1180, Cys-1187–Cys-1198, Cys-1192–Cys-1207, Cys-1209–Cys-1218, Cys-1238–Cys-1253, Cys-1255–Cys-1264, Cys-1271–Cys-1284, Cys-1276–Cys-1293, Cys-1295–Cys-1304, Cys-1311–Cys-1322, Cys-1316–Cys-1334, Cys-1336–Cys-1345, Cys-1352–Cys-1363, Cys-1357–Cys-1372, Cys-1374–Cys-1383, Cys-1391–Cys-1403, Cys-1397–Cys-1414, Cys-1416–Cys-1425, Cys-1449–Cys-1472, Cys-1454–Cys-1467, and Cys-1463–Cys-1479. The O-linked (Glc...) serine glycan is linked to Ser-496. Asp-507 and Lys-508 together coordinate Ca(2+). In terms of domain architecture, EGF-like 14; calcium-binding spans Asp-528–Glu-564. A glycan (O-linked (Glc...) serine) is linked at Ser-534. The EGF-like 15; calcium-binding domain occupies Asp-566–Glu-601. The 37-residue stretch at Asn-603 to Glu-639 folds into the EGF-like 16; calcium-binding domain. The O-linked (Glc...) serine glycan is linked to Ser-609. Thr-617 carries an O-linked (Fuc...) threonine glycan. The EGF-like 17; calcium-binding domain occupies Asn-641–Asn-676. O-linked (Glc...) serine glycosylation is present at Ser-647. One can recognise an EGF-like 18; calcium-binding domain in the interval Asn-678–Leu-714. O-linked (Fuc...) threonine glycosylation occurs at Thr-692. An EGF-like 19; calcium-binding domain is found at Glu-716 to Asp-751. Ser-722 is a glycosylation site (O-linked (Glc...) serine). In terms of domain architecture, EGF-like 20 spans Asn-753–Gln-789. O-linked (Glc...) serine glycosylation occurs at Ser-759. O-linked (Fuc...) threonine glycosylation occurs at Thr-767. The O-linked (GlcNAc) serine glycan is linked to Ser-784. Residues Asn-791–Glu-827 enclose the EGF-like 21; calcium-binding domain. An O-linked (Glc...) serine glycan is attached at Ser-797. Thr-805 is a glycosylation site (O-linked (Fuc...) threonine). The EGF-like 22 domain maps to Val-829–Glu-867. An EGF-like 23; calcium-binding domain is found at Asp-869–Glu-905. The EGF-like 24 domain maps to Asp-907 to Glu-943. The O-linked (Fuc) serine glycan is linked to Ser-921. The region spanning Asp-945–Glu-981 is the EGF-like 25; calcium-binding domain. O-linked (Glc...) serine glycosylation occurs at Ser-951. N-linked (GlcNAc...) asparagine glycosylation is present at Asn-959. 5 EGF-like domains span residues Asn-983–Gln-1019, Asp-1021–Gln-1057, Leu-1059–Asp-1095, Pro-1097–Glu-1143, and Leu-1145–Ser-1181. An O-linked (Fuc...) threonine glycan is attached at Thr-997. Ser-1027 carries an O-linked (Glc...) serine glycan. Thr-1035 carries O-linked (Fuc...) threonine glycosylation. O-linked (Glc...) serine glycosylation occurs at Ser-1065. Residue Thr-1159 is glycosylated (O-linked (Fuc...) threonine). Asn-1179 carries N-linked (GlcNAc...) asparagine glycosylation. An EGF-like 31; calcium-binding domain is found at Glu-1183–Glu-1219. O-linked (Glc...) serine glycosylation is present at Ser-1189. Thr-1197 is a glycosylation site (O-linked (Fuc...) threonine). One can recognise an EGF-like 32; calcium-binding domain in the interval Asn-1221–Glu-1265. Residue Asn-1241 is glycosylated (N-linked (GlcNAc...) asparagine). EGF-like domains follow at residues Asp-1267–Glu-1305, Val-1307–Glu-1346, Asp-1348–Gln-1384, and Ala-1387–His-1426. Ser-1273 carries O-linked (Glc...) serine glycosylation. Thr-1362 is a glycosylation site (O-linked (Fuc...) threonine). A glycan (O-linked (GlcNAc...) threonine) is linked at Thr-1379. Thr-1402 carries O-linked (Fuc...) threonine; alternate glycosylation. A glycan (O-linked (GalNAc...) threonine; alternate) is linked at Thr-1402. 3 LNR repeats span residues Cys-1449–Asn-1489, Cys-1490–Leu-1531, and Tyr-1532–Ala-1571. Ca(2+) is bound by residues Asp-1457, Asn-1460, Asp-1475, and Asp-1478. A glycan (N-linked (GlcNAc...) asparagine) is linked at Asn-1489. 5 disulfides stabilise this stretch: Cys-1490/Cys-1514, Cys-1496/Cys-1509, Cys-1505/Cys-1521, Cys-1536/Cys-1549, and Cys-1545/Cys-1561. A glycan (N-linked (GlcNAc...) asparagine) is linked at Asn-1587. Thr-1725 carries an O-linked (GalNAc...) threonine glycan. The tract at residues Pro-1728–Arg-1760 is interaction with PSEN1. A helical membrane pass occupies residues Phe-1736–Leu-1756. Residues Ser-1757 to Lys-2555 are Cytoplasmic-facing. Lys-1759 is covalently cross-linked (Glycyl lysine isopeptide (Lys-Gly) (interchain with G-Cter in ubiquitin)). The interval Lys-1780–Asp-1808 is disordered. Thr-1861 is subject to Phosphothreonine. ANK repeat units follow at residues Thr-1927–Ile-1956, Met-1960–Ala-1990, Asp-1994–Ala-2023, Leu-2027–Met-2056, Arg-2060–Ile-2089, and Arg-2095–Pro-2122. The HIF1AN-binding stretch occupies residues Leu-1947–Asn-1955. A (3S)-3-hydroxyasparagine; by HIF1AN; partial modification is found at Asn-1955. The segment at Leu-2014–Asn-2022 is HIF1AN-binding. Asn-2022 bears the (3S)-3-hydroxyasparagine; by HIF1AN mark. 3 disordered regions span residues Pro-2151–Ser-2194, Leu-2379–Gly-2447, and Thr-2483–Lys-2555. Over residues Leu-2379–Leu-2408 the composition is skewed to low complexity. Polar residues predominate over residues Thr-2483 to Leu-2502. The segment covering Pro-2512–Ser-2527 has biased composition (low complexity). Polar residues predominate over residues Asn-2528–Ile-2547.

It belongs to the NOTCH family. In terms of assembly, heterodimer of a C-terminal fragment N(TM) and an N-terminal fragment N(EC) which are probably linked by disulfide bonds. Interacts with DNER, DTX1, DTX2 and RBPJ/RBPSUH. Also interacts with MAML1, MAML2 and MAML3 which act as transcriptional coactivators for NOTCH1. The NOTCH1 intracellular domain interacts with SNW1; the interaction involves multimerized NOTCH1 NICD and is implicated in a formation of an intermediate preactivation complex which associates with DNA-bound CBF-1/RBPJ. The activated membrane-bound form interacts with AAK1 which promotes NOTCH1 stabilization. Forms a trimeric complex with FBXW7 and SGK1. Interacts with HIF1AN. HIF1AN negatively regulates the function of notch intracellular domain (NICD), accelerating myogenic differentiation. Interacts (via NICD) with SNAI1 (via zinc fingers); the interaction induces SNAI1 degradation via MDM2-mediated ubiquitination and inhibits SNAI1-induced cell invasion. Interacts (via NICD) with MDM2A. Interacts (via NICD) with BCL6; the interaction decreases MAML1 recruitment by NOTCH1 NICD on target genes DNA and inhibits NOTCH1 transactivation activity. Interacts with THBS4. Interacts (via the EGF-like repeat region) with CCN3 (via CTCK domain). Interacts (via EGF-like domains) with DLL4 (via N-terminal DSL and MNNL domains). Interacts with ZMIZ1. Interacts (via NICD domain) with MEGF10 (via the cytoplasmic domain). Interacts with DLL1 and JAG1. Interacts (via NICD domain) with PRAG1. Forms a complex with PRAG1, N1ICD and MAML1, in a MAML1-dependent manner. Interacts (via transmembrane region) with PSEN1; the interaction is direct. Interacts with ZFP64. Post-translationally, synthesized in the endoplasmic reticulum as an inactive form which is proteolytically cleaved by a furin-like convertase in the trans-Golgi network before it reaches the plasma membrane to yield an active, ligand-accessible form. Cleavage results in a C-terminal fragment N(TM) and a N-terminal fragment N(EC). Following ligand binding, it is cleaved by ADAM17 to yield a membrane-associated intermediate fragment called notch extracellular truncation (NEXT). Following endocytosis, this fragment is then cleaved by one of the catalytic subunits of gamma-secretase (PSEN1 or PSEN2), to release a Notch-derived peptide containing the intracellular domain (NICD) from the membrane. In terms of processing, phosphorylated. O-glycosylated on the EGF-like domains. O-glucosylated at Ser-435 by KDELC1 and KDELC2. Contains both O-linked fucose and O-linked glucose in the EGF-like domains 11, 12 and 13, which are interacting with the residues on DLL4. O-linked glycosylation by GALNT11 is involved in determination of left/right symmetry: glycosylation promotes activation of NOTCH1, possibly by promoting cleavage by ADAM17, modulating the balance between motile and immotile (sensory) cilia at the left-right organiser (LRO). MFNG-, RFNG- and LFNG-mediated modification of O-fucose residues at specific EGF-like domains results in inhibition of its activation by JAG1 and enhancement of its activation by DLL1 via an increased binding to DLL1. Post-translationally, ubiquitinated. Undergoes 'Lys-29'-linked polyubiquitination by ITCH; promotes the lysosomal degradation of non-activated internalized NOTCH1. Deubiquitination by USP12 is required for transport of internalized non-activated receptor from late endosomes to lysosomes for degradation. Monoubiquitination at Lys-1759 is required for activation by gamma-secretase cleavage, it promotes interaction with AAK1, which stabilizes it. Deubiquitination by EIF3F is necessary for nuclear import of activated Notch. In terms of processing, hydroxylated at Asn-1955 by HIF1AN. Hydroxylated at Asn-2022 by HIF1AN. Hydroxylation reduces affinity for HI1AN and may thus indirectly modulate negative regulation of NICD. In fetal tissues most abundant in spleen, brain stem and lung. Also present in most adult tissues where it is found mainly in lymphoid tissues.

It is found in the cell membrane. Its subcellular location is the late endosome membrane. It localises to the nucleus. Its function is as follows. Functions as a receptor for membrane-bound ligands Jagged-1 (JAG1), Jagged-2 (JAG2) and Delta-1 (DLL1) to regulate cell-fate determination. Upon ligand activation through the released notch intracellular domain (NICD) it forms a transcriptional activator complex with RBPJ/RBPSUH and activates genes of the enhancer of split locus. Affects the implementation of differentiation, proliferation and apoptotic programs. Involved in angiogenesis; negatively regulates endothelial cell proliferation and migration and angiogenic sprouting. Involved in the maturation of both CD4(+) and CD8(+) cells in the thymus. Important for follicular differentiation and possibly cell fate selection within the follicle. During cerebellar development, functions as a receptor for neuronal DNER and is involved in the differentiation of Bergmann glia. Represses neuronal and myogenic differentiation. May play an essential role in postimplantation development, probably in some aspect of cell specification and/or differentiation. May be involved in mesoderm development, somite formation and neurogenesis. May enhance HIF1A function by sequestering HIF1AN away from HIF1A. Required for the THBS4 function in regulating protective astrogenesis from the subventricular zone (SVZ) niche after injury. Involved in determination of left/right symmetry by modulating the balance between motile and immotile (sensory) cilia at the left-right organiser (LRO). The sequence is that of Neurogenic locus notch homolog protein 1 (NOTCH1) from Homo sapiens (Human).